Reading from the N-terminus, the 286-residue chain is ATP synthase gamma chain (286 aa).

This sequence belongs to the ATPase gamma chain family. F-type ATPases have 2 components, CF(1) - the catalytic core - and CF(0) - the membrane proton channel. CF(1) has five subunits: alpha(3), beta(3), gamma(1), delta(1), epsilon(1). CF(0) has three main subunits: a, b and c.

The protein resides in the cell inner membrane. In terms of biological role, produces ATP from ADP in the presence of a proton gradient across the membrane. The gamma chain is believed to be important in regulating ATPase activity and the flow of protons through the CF(0) complex. The chain is ATP synthase gamma chain from Shewanella oneidensis (strain ATCC 700550 / JCM 31522 / CIP 106686 / LMG 19005 / NCIMB 14063 / MR-1).